Consider the following 153-residue polypeptide: Insulin-like growth factor 1 (153 aa).

The interval 49–77 (GPETLCGAELVDALQFVCGDRGFYFNKPT) is b. 3 cysteine pairs are disulfide-bonded: Cys54/Cys96, Cys66/Cys109, and Cys95/Cys100. A c region spans residues 78–89 (GYGSSSRRAPQT). The a stretch occupies residues 90–110 (GIVDECCFRSCDLRRLEMYCA). The segment at 111 to 118 (PLKPAKSA) is d. The propeptide at 119-153 (RSVRAQRHTDMPKAQKEVHLKNTSRGSSGNKNYRM) is e peptide. The tract at residues 120–153 (SVRAQRHTDMPKAQKEVHLKNTSRGSSGNKNYRM) is disordered. Positions 125 to 138 (RHTDMPKAQKEVHL) are enriched in basic and acidic residues. Positions 139–153 (KNTSRGSSGNKNYRM) are enriched in polar residues.

It belongs to the insulin family. Forms a ternary complex with IGFR1 and ITGAV:ITGB3. Forms a ternary complex with IGFR1 and ITGA6:ITGB4. Forms a ternary complex with IGFBP3 and ALS.

The protein localises to the secreted. Its function is as follows. The insulin-like growth factors, isolated from plasma, are structurally and functionally related to insulin but have a much higher growth-promoting activity. May be a physiological regulator of [1-14C]-2-deoxy-D-glucose (2DG) transport and glycogen synthesis in osteoblasts. Stimulates glucose transport in bone-derived osteoblastic (PyMS) cells and is effective at much lower concentrations than insulin, not only regarding glycogen and DNA synthesis but also with regard to enhancing glucose uptake. May play a role in synapse maturation. Ca(2+)-dependent exocytosis of IGF1 is required for sensory perception of smell in the olfactory bulb. Acts as a ligand for IGF1R. Binds to the alpha subunit of IGF1R, leading to the activation of the intrinsic tyrosine kinase activity which autophosphorylates tyrosine residues in the beta subunit thus initiating a cascade of down-stream signaling events leading to activation of the PI3K-AKT/PKB and the Ras-MAPK pathways. Binds to integrins ITGAV:ITGB3 and ITGA6:ITGB4. Its binding to integrins and subsequent ternary complex formation with integrins and IGFR1 are essential for IGF1 signaling. Induces the phosphorylation and activation of IGFR1, MAPK3/ERK1, MAPK1/ERK2 and AKT1. As part of the MAPK/ERK signaling pathway, acts as a negative regulator of apoptosis in cardiomyocytes via promotion of STUB1/CHIP-mediated ubiquitination and degradation of ICER-type isoforms of CREM. This chain is Insulin-like growth factor 1, found in Sus scrofa (Pig).